We begin with the raw amino-acid sequence, 636 residues long: MPVITLPDGSKREYDAPISVMGVAADIGPGLAKATLAGVVDGKEVDASFEITQDVSLSIITAKSEEGLEVIRHSTAHLLAQAVKQLFPEAQVTIGPVIEDGFYYDFAYSRAFTPEDLVVIEEKMKELAKADFDVTRRVLPRDEASAYFRGIGEEYKAQIIDSIPANEELSLYKQGDFEDLCRGPHVPSTGKLEYFKLMKVAGAYWRGDSNNEMLTRVYGTAWASKKDLKAYVHRLEEAEKRDHRKLGKKFDLFHIQEEAPGMVFWHPNGWSIYTAIEEYMREVQRLNGYEEIKTPQVVDRSLWERSGHWDKFRDNMFTVESESRDYAVKPMNCPCHVQVFNQGLKSYRDLPLRLAEFGCCHRNEASGTLQGLMRVRGFVQDDAHIFCSESMIQDEVSVFTDLLFKVYKDFGFEDVIIRLSTRPEQRVGSDEVWDKAEKALSDALDAKGLPWQLLPGEGAFYGPKIEFSLKDCLGRVWQCGTIQVDFSMPGRLDAQFVAEDGSRQVPVMLHRAILGSFERFIGILIEEYEGAFPAWLAPTQAVLLNITDNQAEYVKKVENSLKNKGFRVNSDLRNEKIGFKIREHTIQKVPYLLVVGDQEVENNSVAVRGRGGEDLGVMTVDAFTALLEEQISSKAR.

The region spanning methionine 1–threonine 61 is the TGS domain. The segment at aspartate 242 to proline 533 is catalytic. 3 residues coordinate Zn(2+): cysteine 333, histidine 384, and histidine 510.

The protein belongs to the class-II aminoacyl-tRNA synthetase family. As to quaternary structure, homodimer. Zn(2+) serves as cofactor.

It is found in the cytoplasm. The catalysed reaction is tRNA(Thr) + L-threonine + ATP = L-threonyl-tRNA(Thr) + AMP + diphosphate + H(+). Functionally, catalyzes the attachment of threonine to tRNA(Thr) in a two-step reaction: L-threonine is first activated by ATP to form Thr-AMP and then transferred to the acceptor end of tRNA(Thr). Also edits incorrectly charged L-seryl-tRNA(Thr). The chain is Threonine--tRNA ligase from Saccharophagus degradans (strain 2-40 / ATCC 43961 / DSM 17024).